Here is a 463-residue protein sequence, read N- to C-terminus: Xanthone prenyltransferase B (463 aa).

The protein belongs to the tryptophan dimethylallyltransferase family.

It functions in the pathway secondary metabolite biosynthesis. Mn(2+) and Co(2+) strongly enhance prenylation activity. Functionally, dehydrogenase involved in the conversion of monodictyphenone to the prenyl xanthones such as emericellin, shamixanthone and epishamixanthone. Monodictyphenone is first converted to variecoxanthone A via a paeciloxanthone intermediate by the consecutive actions of the FAD-dependent monooxygenase mdpD and the xanthone prenyltransferase xptB. XptB catalyzes regular O-prenylation at the hydroxy group of C-7 of the xanthone ring. Variecoxanthone A is further prenylated to emericellin by xptA before being reduced to shamixanthone and epishamixanthone by the dehydrogenase xptC. This chain is Xanthone prenyltransferase B, found in Emericella nidulans (strain FGSC A4 / ATCC 38163 / CBS 112.46 / NRRL 194 / M139) (Aspergillus nidulans).